The sequence spans 224 residues: MVQCLVVDDDPRILNYIASHLQIEHIDAYTQPSGEAALKLLEKQRVDIAVVDIMMDGMDGFQLCNTLKNDYDIPVIMLTARDALSDKERAFISGTDDYVTKPFEVKELIFRIRAVLRRYNINSNSEMTIGNLTLNQSYLELQVSNKTMTLPNKEFQLLFMLAARPKQIFTREQIIEKIWGYDYEGDERTVDVHIKRLRQRLKKLNATLTIETVRGQGYKVENHV.

The Response regulatory domain maps to 3 to 116 (QCLVVDDDPR…ELIFRIRAVL (114 aa)). Residue aspartate 52 is modified to 4-aspartylphosphate. Residues 124–222 (NSEMTIGNLT…VRGQGYKVEN (99 aa)) constitute a DNA-binding region (ompR/PhoB-type).

Phosphorylated by HssS.

The protein resides in the cytoplasm. In terms of biological role, member of the two-component regulatory system HssS/HssR involved in intracellular heme homeostasis and tempering of staphylococcal virulence. Phosphorylated HssR binds to a direct repeat sequence within hrtAB promoter and activates the expression of hrtAB, an efflux pump, in response to extracellular heme, hemin, hemoglobin or blood. The chain is Heme response regulator HssR (hssR) from Staphylococcus aureus (strain COL).